Here is a 244-residue protein sequence, read N- to C-terminus: tRNA pseudouridine synthase A (244 aa).

The active-site Nucleophile is the Asp-52. Tyr-110 is a substrate binding site.

This sequence belongs to the tRNA pseudouridine synthase TruA family. In terms of assembly, homodimer.

The catalysed reaction is uridine(38/39/40) in tRNA = pseudouridine(38/39/40) in tRNA. In terms of biological role, formation of pseudouridine at positions 38, 39 and 40 in the anticodon stem and loop of transfer RNAs. This chain is tRNA pseudouridine synthase A, found in Geotalea uraniireducens (strain Rf4) (Geobacter uraniireducens).